The primary structure comprises 259 residues: 3-deoxy-manno-octulosonate cytidylyltransferase (259 aa).

Belongs to the KdsB family.

It localises to the cytoplasm. The enzyme catalyses 3-deoxy-alpha-D-manno-oct-2-ulosonate + CTP = CMP-3-deoxy-beta-D-manno-octulosonate + diphosphate. Its pathway is nucleotide-sugar biosynthesis; CMP-3-deoxy-D-manno-octulosonate biosynthesis; CMP-3-deoxy-D-manno-octulosonate from 3-deoxy-D-manno-octulosonate and CTP: step 1/1. The protein operates within bacterial outer membrane biogenesis; lipopolysaccharide biosynthesis. Its function is as follows. Activates KDO (a required 8-carbon sugar) for incorporation into bacterial lipopolysaccharide in Gram-negative bacteria. In Nitrosococcus oceani (strain ATCC 19707 / BCRC 17464 / JCM 30415 / NCIMB 11848 / C-107), this protein is 3-deoxy-manno-octulosonate cytidylyltransferase.